A 107-amino-acid polypeptide reads, in one-letter code: Sperm protamine P1 (107 aa).

2 stretches are compositionally biased toward basic and acidic residues: residues 1 to 10 (ALRKVDRNRF) and 20 to 33 (REAK…EFPG). Positions 1–35 (ALRKVDRNRFVLDNVTPQPREAKRYKEEEEFPGHG) are cleaved as a propeptide — removed in mature form. Residues 1 to 107 (ALRKVDRNRF…RRRRRGKKGK (107 aa)) form a disordered region. Residues 34-107 (HGRRRRRRSK…RRRRRGKKGK (74 aa)) are compositionally biased toward basic residues. Ser-42 is modified (phosphoserine).

Post-translationally, a series of N-terminal cleavages yield the mature protein. Only the mature protein is phosphorylated. Gonads.

The protein resides in the nucleus. It is found in the chromosome. In terms of biological role, protamines substitute for histones in the chromatin of sperm during the haploid phase of spermatogenesis. They compact sperm DNA into a highly condensed, stable and inactive complex. This chain is Sperm protamine P1, found in Bolinus brandaris (Purple dye murex).